A 593-amino-acid chain; its full sequence is Sodium-independent sulfate anion transporter (593 aa).

Over 1 to 34 (MAPDTCCCSATALRRRLPVLAWVPDYSLQWLRLD) the chain is Extracellular. A helical membrane pass occupies residues 35–55 (FIAGLSVGLTVIPQALAYAEV). Ala56 is a topological domain (cytoplasmic). The chain crosses the membrane as a helical span at residues 57–77 (GLPPQYGLYSAFMGCFVYFFL). Over 78-82 (GTSRD) the chain is Extracellular. The chain crosses the membrane as a helical span at residues 83–100 (VTLGPTAIMSLLVSFYTF). The Cytoplasmic portion of the chain corresponds to 101–106 (REPAYA). A helical transmembrane segment spans residues 107 to 127 (VLLAFLSGCIQLAMGLLHLGF). Residues 128–176 (LLDFISCPVIKGFTSAASITIGFGQIKNLLGLQKIPRQFFLQVYHTFLH) lie on the Extracellular side of the membrane. Residues 177-197 (IGETRVGDAVLGLASMLLLLV) traverse the membrane as a helical segment. At 198 to 233 (LKCMREHMPPPHPEMPLAVKFSRGLVWTVTTARNAL) the chain is on the cytoplasmic side. A helical transmembrane segment spans residues 234-254 (VVSSAALIAYAFEVTGSHPFV). Residues 255 to 287 (LTGKIAEGLPPVRIPPFSVTRDNKTISFSEMVQ) lie on the Extracellular side of the membrane. A helical transmembrane segment spans residues 288–308 (DMGAGLAVVPLMGLLESIAVA). At 309 to 324 (KSFASQNNYRIDANQE) the chain is on the cytoplasmic side. Residues 325 to 345 (LLAIGLTNVLGSLVSSYPVTG) form a helical membrane-spanning segment. Residues 346-361 (SFGRTAVNAQTGVCTP) lie on the Extracellular side of the membrane. The chain crosses the membrane as a helical span at residues 362 to 382 (AGGLVTGALVLLSLNYLTSLF). Ser383 is a topological domain (cytoplasmic). Residues 384–404 (YIPKSALAAVIITAVTPLFDV) form a helical membrane-spanning segment. Residues 405-417 (KIFRSLWRVQRLD) lie on the Extracellular side of the membrane. Residues 418-438 (LLPLCVTFLLSFWEIQYGILA) traverse the membrane as a helical segment. Residues 439-593 (GSLVSLLILL…SSLLKSPSGP (155 aa)) lie on the Cytoplasmic side of the membrane. The 114-residue stretch at 453 to 566 (RPKTQVSEGQ…EEAEKFLQQE (114 aa)) folds into the STAS domain. Residues 564–593 (QQEPGTEPNSIHEDAVPEQRSSLLKSPSGP) are disordered. Polar residues predominate over residues 582-593 (QRSSLLKSPSGP).

It belongs to the SLC26A/SulP transporter (TC 2.A.53) family. As to expression, abundantly expressed in the cerebellum, with a predominant expression in Purkinje cells (at protein level). In terms of tissue distribution, predominantly expressed in the kidney and brain. In the kidney localizes in collecting duct intercalated cells (at protein level). Predominantly expressed in the brain with lower levels in the kidney.

It is found in the cell membrane. It localises to the lysosome membrane. The protein resides in the apical cell membrane. Its subcellular location is the basolateral cell membrane. It carries out the reaction hydrogencarbonate(in) + chloride(out) = hydrogencarbonate(out) + chloride(in). The catalysed reaction is sulfate(in) + H(+)(in) = sulfate(out) + H(+)(out). It catalyses the reaction oxalate(in) + chloride(out) = oxalate(out) + chloride(in). Functionally, sodium-independent anion exchanger mediating bicarbonate, chloride, sulfate and oxalate transport. Exhibits sodium-independent sulfate anion transporter activity that may cooperate with SLC26A2 to mediate DIDS-sensitive sulfate uptake into high endothelial venules endothelial cells (HEVEC). In the kidney, mediates chloride-bicarbonate exchange, facilitating V-ATPase-mediated acid secretion. May function as a chloride channel, playing an important role in moderating chloride homeostasis and neuronal activity in the cerebellum. The chain is Sodium-independent sulfate anion transporter from Mus musculus (Mouse).